The primary structure comprises 510 residues: Putative folylpolyglutamate synthase (510 aa).

Residue 98–101 participates in ATP binding; that stretch reads GKGS. The Mg(2+) site is built by Ser122, Glu189, and His217. The ATP site is built by Arg342 and Asp357.

This sequence belongs to the folylpolyglutamate synthase family. A monovalent cation is required as a cofactor.

The protein resides in the mitochondrion inner membrane. It is found in the mitochondrion matrix. The protein localises to the cytoplasm. The enzyme catalyses (6S)-5,6,7,8-tetrahydrofolyl-(gamma-L-Glu)(n) + L-glutamate + ATP = (6S)-5,6,7,8-tetrahydrofolyl-(gamma-L-Glu)(n+1) + ADP + phosphate + H(+). It participates in cofactor biosynthesis; tetrahydrofolylpolyglutamate biosynthesis. In terms of biological role, catalyzes conversion of folates to polyglutamate derivatives allowing concentration of folate compounds in the cell and the intracellular retention of these cofactors, which are important substrates for most of the folate-dependent enzymes that are involved in one-carbon transfer reactions involved in purine, pyrimidine and amino acid synthesis. In Caenorhabditis elegans, this protein is Putative folylpolyglutamate synthase.